A 163-amino-acid polypeptide reads, in one-letter code: 6,7-dimethyl-8-ribityllumazine synthase (163 aa).

Residues Phe-27, 58–60, and 87–89 contribute to the 5-amino-6-(D-ribitylamino)uracil site; these read ALE and CVV. A (2S)-2-hydroxy-3-oxobutyl phosphate-binding site is contributed by 92 to 93; it reads DT. His-95 acts as the Proton donor in catalysis. Position 120 (Asn-120) interacts with 5-amino-6-(D-ribitylamino)uracil. Arg-134 is a binding site for (2S)-2-hydroxy-3-oxobutyl phosphate.

The protein belongs to the DMRL synthase family.

It catalyses the reaction (2S)-2-hydroxy-3-oxobutyl phosphate + 5-amino-6-(D-ribitylamino)uracil = 6,7-dimethyl-8-(1-D-ribityl)lumazine + phosphate + 2 H2O + H(+). The protein operates within cofactor biosynthesis; riboflavin biosynthesis; riboflavin from 2-hydroxy-3-oxobutyl phosphate and 5-amino-6-(D-ribitylamino)uracil: step 1/2. Functionally, catalyzes the formation of 6,7-dimethyl-8-ribityllumazine by condensation of 5-amino-6-(D-ribitylamino)uracil with 3,4-dihydroxy-2-butanone 4-phosphate. This is the penultimate step in the biosynthesis of riboflavin. The polypeptide is 6,7-dimethyl-8-ribityllumazine synthase (Nitrobacter hamburgensis (strain DSM 10229 / NCIMB 13809 / X14)).